The following is a 639-amino-acid chain: Nitrous-oxide reductase (639 aa).

Positions 1–54 (MSDKKDQVPGAVEAPRGVSRRSFLGTGAVTGAVLAGATALGAGTFTRESWAAAA) form a signal peptide, tat-type signal. Cu cation contacts are provided by His-130, His-131, and His-179. Positions 257, 260, 268, 274, and 325 each coordinate Ca(2+). Cu cation contacts are provided by His-327, His-383, and His-434. 2 residues coordinate Ca(2+): Lys-455 and Glu-470. Cu cation contacts are provided by His-495, His-584, Cys-619, Trp-621, Cys-623, His-627, and Met-630. Positions 543–639 (NKVRVYMTSM…MVGRMLVEKA (97 aa)) are COX2-like.

The protein belongs to the NosZ family. It in the C-terminal section; belongs to the cytochrome c oxidase subunit 2 family. In terms of assembly, homodimer. Requires Ca(2+) as cofactor. It depends on Cu cation as a cofactor. Post-translationally, predicted to be exported by the Tat system. The position of the signal peptide cleavage has not been experimentally proven.

It is found in the periplasm. The enzyme catalyses N2 + 2 Fe(III)-[cytochrome c] + H2O = nitrous oxide + 2 Fe(II)-[cytochrome c] + 2 H(+). Its pathway is nitrogen metabolism; nitrate reduction (denitrification); dinitrogen from nitrate: step 4/4. Nitrous-oxide reductase is part of a bacterial respiratory system which is activated under anaerobic conditions in the presence of nitrate or nitrous oxide. In Pseudomonas fluorescens, this protein is Nitrous-oxide reductase (nosZ).